Reading from the N-terminus, the 327-residue chain is Probable cell division protein WhiA (327 aa).

A DNA-binding region (H-T-H motif) is located at residues 275–308; it reads SLEELGRLADPPMTKDAVAGRIRRLLSMADRKAK.

Belongs to the WhiA family.

In terms of biological role, involved in cell division and chromosome segregation. This chain is Probable cell division protein WhiA, found in Mycobacterium marinum (strain ATCC BAA-535 / M).